We begin with the raw amino-acid sequence, 126 residues long: Arginine decarboxylase proenzyme (126 aa).

Ser74 serves as the catalytic Schiff-base intermediate with substrate; via pyruvic acid. Pyruvic acid (Ser); by autocatalysis is present on Ser74. His79 serves as the catalytic Proton acceptor; for processing activity. The active-site Proton donor; for catalytic activity is Cys94.

Belongs to the prokaryotic AdoMetDC family. Type 1 subfamily. Heterooctamer of four alpha and four beta chains arranged as a tetramer of alpha/beta heterodimers. It depends on pyruvate as a cofactor. Post-translationally, is synthesized initially as an inactive proenzyme. Formation of the active enzyme involves a self-maturation process in which the active site pyruvoyl group is generated from an internal serine residue via an autocatalytic post-translational modification. Two non-identical subunits are generated from the proenzyme in this reaction, and the pyruvate is formed at the N-terminus of the alpha chain, which is derived from the carboxyl end of the proenzyme. The post-translation cleavage follows an unusual pathway, termed non-hydrolytic serinolysis, in which the side chain hydroxyl group of the serine supplies its oxygen atom to form the C-terminus of the beta chain, while the remainder of the serine residue undergoes an oxidative deamination to produce ammonia and the pyruvoyl group blocking the N-terminus of the alpha chain.

The catalysed reaction is L-arginine + H(+) = agmatine + CO2. The protein operates within amine and polyamine biosynthesis; agmatine biosynthesis; agmatine from L-arginine: step 1/1. Its function is as follows. Specifically catalyzes the decarboxylation of L-arginine to agmatine. Has no S-adenosylmethionine decarboxylase (AdoMetDC) activity. The sequence is that of Arginine decarboxylase proenzyme from Pyrobaculum islandicum (strain DSM 4184 / JCM 9189 / GEO3).